Here is a 64-residue protein sequence, read N- to C-terminus: UPF0337 protein SAR0874 (64 aa).

The disordered stretch occupies residues 1–40; that stretch reads MADESKFEQAKGNVKETVGNVTDNKNLENEGKEDKASGKA. Basic and acidic residues predominate over residues 25 to 40; it reads KNLENEGKEDKASGKA.

This sequence belongs to the UPF0337 (CsbD) family.

This chain is UPF0337 protein SAR0874, found in Staphylococcus aureus (strain MRSA252).